Here is a 786-residue protein sequence, read N- to C-terminus: Calcium-independent phospholipase A2-gamma (786 aa).

N-linked (GlcNAc...) asparagine glycosylation occurs at Asn4. 3 disordered regions span residues 158–180 (KKYSDKSTEKSPVPEGRNHIIDK), 225–285 (KENS…SLPI), and 321–348 (SKSQAEEQEEPAKSEPAGSKDKTVEEKK). Basic and acidic residues predominate over residues 225-245 (KENSHFQEKSELEGKKVEEGK). Composition is skewed to polar residues over residues 246 to 258 (SSSLDPGILTSQA) and 266 to 285 (SAGTMDKATSPSGTPESLPI). A PNPLA domain is found at 449-644 (LTIDGGGTRG…LLNNPSALAM (196 aa)). Positions 453–458 (GGGTRG) match the GXGXXG motif. Residues 483-503 (ICGVSTGAILAFMLGLFHLPL) traverse the membrane as a helical segment. The GXSXG motif lies at 485-489 (GVSTG). Ser487 (nucleophile) is an active-site residue. The active-site Proton acceptor is Asp631. Positions 631 to 633 (DGG) match the DGA/G motif. Position 740 is an N6-succinyllysine (Lys740).

Expressed in kidney, heart and brain.

The protein resides in the endoplasmic reticulum membrane. Its subcellular location is the mitochondrion membrane. It localises to the peroxisome membrane. The catalysed reaction is a 1,2-diacyl-sn-glycero-3-phosphocholine + H2O = a 1-acyl-sn-glycero-3-phosphocholine + a fatty acid + H(+). The enzyme catalyses a 1,2-diacyl-sn-glycero-3-phosphocholine + H2O = a 2-acyl-sn-glycero-3-phosphocholine + a fatty acid + H(+). It catalyses the reaction a 1,2-diacyl-sn-glycero-3-phosphoethanolamine + H2O = a 1-acyl-sn-glycero-3-phosphoethanolamine + a fatty acid + H(+). It carries out the reaction a 1-O-(1Z-alkenyl)-2-acyl-sn-glycero-3-phosphocholine + H2O = a 1-O-(1Z-alkenyl)-sn-glycero-3-phosphocholine + a fatty acid + H(+). The catalysed reaction is a 1-acyl-sn-glycero-3-phosphocholine + H2O = sn-glycerol 3-phosphocholine + a fatty acid + H(+). The enzyme catalyses 1-acyl-2-(9Z,12Z)-octadecadienoyl-sn-glycero-3-phosphocholine + H2O = a 1-acyl-sn-glycero-3-phosphocholine + (9Z,12Z)-octadecadienoate + H(+). It catalyses the reaction 1-acyl-2-(5Z,8Z,11Z,14Z-eicosatetraenoyl)-sn-glycero-3-phosphocholine + H2O = a 1-acyl-sn-glycero-3-phosphocholine + (5Z,8Z,11Z,14Z)-eicosatetraenoate + H(+). It carries out the reaction 1-hexadecanoyl-2-(5Z,8Z,11Z,14Z-eicosatetraenoyl)-sn-glycero-3-phosphocholine + H2O = 1-hexadecanoyl-sn-glycero-3-phosphocholine + (5Z,8Z,11Z,14Z)-eicosatetraenoate + H(+). The catalysed reaction is 1-octadecanoyl-2-(9Z-octadecenoyl)-sn-glycero-3-phosphocholine + H2O = 1-octadecanoyl-sn-glycero-3-phosphocholine + (9Z)-octadecenoate + H(+). The enzyme catalyses 1-hexadecanoyl-2-(9Z-octadecenoyl)-sn-glycero-3-phosphocholine + H2O = 1-hexadecanoyl-sn-glycero-3-phosphocholine + (9Z)-octadecenoate + H(+). It catalyses the reaction 1-hexadecanoyl-2-(9Z,12Z-octadecadienoyl)-sn-glycero-3-phosphocholine + H2O = (9Z,12Z)-octadecadienoate + 1-hexadecanoyl-sn-glycero-3-phosphocholine + H(+). It carries out the reaction 1-acyl-2-(9Z,12Z)-octadecadienoyl-sn-glycero-3-phosphoethanolamine + H2O = a 1-acyl-sn-glycero-3-phosphoethanolamine + (9Z,12Z)-octadecadienoate + H(+). The catalysed reaction is 1-acyl-2-(5Z,8Z,11Z,14Z)-eicosatetraenoyl-sn-glycero-3-phosphoethanolamine + H2O = a 1-acyl-sn-glycero-3-phosphoethanolamine + (5Z,8Z,11Z,14Z)-eicosatetraenoate + H(+). The enzyme catalyses 1-hexadecanoyl-2-(5Z,8Z,11Z,14Z-eicosatetraenoyl)-sn-glycero-3-phosphoethanolamine + H2O = 1-hexadecanoyl-sn-glycero-3-phosphoethanolamine + (5Z,8Z,11Z,14Z)-eicosatetraenoate + H(+). It catalyses the reaction 1-hexadecanoyl-2-(5Z,8Z,11Z,14Z-eicosatetraenoyl)-sn-glycero-3-phosphocholine + H2O = 2-(5Z,8Z,11Z,14Z)-eicosatetraenoyl-sn-glycero-3-phosphocholine + hexadecanoate + H(+). It carries out the reaction 1-octadecanoyl-2-(9Z-octadecenoyl)-sn-glycero-3-phosphocholine + H2O = 2-(9Z-octadecenoyl)-sn-glycero-3-phosphocholine + octadecanoate + H(+). The catalysed reaction is 1-hexadecanoyl-2-(4Z,7Z,10Z,13Z,16Z,19Z-docosahexaenoyl)-sn-glycero-3-phosphocholine + H2O = 2-(4Z,7Z,10Z,13Z,16Z,19Z-docosahexaenoyl)-sn-glycero-3-phosphocholine + hexadecanoate + H(+). The enzyme catalyses 1-O-(1Z)-hexadecenyl-2 (5Z,8Z,11Z,14Z)-eicosatetraenoyl-sn-glycero-3-phosphocholine + H2O = 1-(1Z-hexadecenyl)-sn-glycero-3-phosphocholine + (5Z,8Z,11Z,14Z)-eicosatetraenoate + H(+). It catalyses the reaction 1-O-(1Z-hexadecenyl)-2-(9Z-octadecenoyl)-sn-glycero-3-phosphocholine + H2O = 1-(1Z-hexadecenyl)-sn-glycero-3-phosphocholine + (9Z)-octadecenoate + H(+). It carries out the reaction 1-hexadecanoyl-sn-glycero-3-phosphocholine + H2O = sn-glycerol 3-phosphocholine + hexadecanoate + H(+). The catalysed reaction is 1',3'-bis-[1,2-di-(9Z,12Z-octadecadienoyl)-sn-glycero-3-phospho]-glycerol + H2O = 1'-[1,2-di-(9Z,12Z-octadecadienoyl)-sn-glycero-3-phospho]-3'-[1-(9Z,12Z-octadecadienoyl)-sn-glycero-3-phospho]-glycerol + (9Z,12Z)-octadecadienoate + H(+). The enzyme catalyses 1'-[1-acyl-2-(9-hydroxy-(10E,12Z)-octadecadienoyl)-sn-glycero-3-phospho]-3'-[1,2-diacyl-sn-glycero-3-phospho]-glycerol + H2O = 9-hydroxy-(10E,12Z)-octadecadienoate + 1'-[1,2-diacyl-sn-glycero-3-phospho],3'-[1-acyl-sn-glycero-3-phospho]-glycerol + H(+). The protein operates within phospholipid metabolism. Its activity is regulated as follows. Calcium-independent phospholipase. In terms of biological role, calcium-independent and membrane-bound phospholipase, that catalyzes the esterolytic cleavage of fatty acids from glycerophospholipids to yield free fatty acids and lysophospholipids, hence regulating membrane physical properties and the release of lipid second messengers and growth factors. Hydrolyzes phosphatidylethanolamine, phosphatidylcholine and probably phosphatidylinositol with a possible preference for the former. Has also a broad substrate specificity in terms of fatty acid moieties, hydrolyzing saturated and mono-unsaturated fatty acids at nearly equal rates from either the sn-1 or sn-2 position in diacyl phosphatidylcholine. However, has a weak activity toward polyunsaturated fatty acids at the sn-2 position, and thereby favors the production of 2-arachidonoyl lysophosphatidylcholine, a key branch point metabolite in eicosanoid signaling. On the other hand, can produce arachidonic acid from the sn-1 position of diacyl phospholipid and from the sn-2 position of arachidonate-containing plasmalogen substrates. Therefore, plays an important role in the mobilization of arachidonic acid in response to cellular stimuli and the generation of lipid second messengers. Can also hydrolyze lysophosphatidylcholine. In the mitochondrial compartment, catalyzes the hydrolysis and release of oxidized aliphatic chains from cardiolipin and integrates mitochondrial bioenergetics and signaling. It is essential for maintaining efficient bioenergetic mitochondrial function through tailoring mitochondrial membrane lipid metabolism and composition. This Oryctolagus cuniculus (Rabbit) protein is Calcium-independent phospholipase A2-gamma.